We begin with the raw amino-acid sequence, 342 residues long: Tetraacyldisaccharide 4'-kinase (342 aa).

Position 68–75 (68–75 (TVGGTGKT)) interacts with ATP.

Belongs to the LpxK family.

The catalysed reaction is a lipid A disaccharide + ATP = a lipid IVA + ADP + H(+). Its pathway is glycolipid biosynthesis; lipid IV(A) biosynthesis; lipid IV(A) from (3R)-3-hydroxytetradecanoyl-[acyl-carrier-protein] and UDP-N-acetyl-alpha-D-glucosamine: step 6/6. In terms of biological role, transfers the gamma-phosphate of ATP to the 4'-position of a tetraacyldisaccharide 1-phosphate intermediate (termed DS-1-P) to form tetraacyldisaccharide 1,4'-bis-phosphate (lipid IVA). This Burkholderia vietnamiensis (strain G4 / LMG 22486) (Burkholderia cepacia (strain R1808)) protein is Tetraacyldisaccharide 4'-kinase.